Here is a 542-residue protein sequence, read N- to C-terminus: Major facilitator superfamily transporter mfsA (542 aa).

The next 11 helical transmembrane spans lie at 19–39, 70–90, 99–119, 127–149, 160–180, 194–214, 321–341, 349–369, 380–400, 413–432, and 444–464; these read FAAV…AGLL, GAVT…SMFC, LIFM…VCYT, FVIG…PVWQ, FLVC…YWVV, FPVA…LMLP, IMGG…FFMI, LYLI…ACLI, AVGI…LPWI, VGAS…VVMF, and VYLF…FFYV.

It belongs to the major facilitator superfamily. Sugar transporter (TC 2.A.1.1) family.

It is found in the membrane. In terms of biological role, major facilitator superfamily transporter that may be involved in A.fumigatus adaptation to azoles such as vorizonazole. This chain is Major facilitator superfamily transporter mfsA, found in Aspergillus fumigatus (strain ATCC MYA-4609 / CBS 101355 / FGSC A1100 / Af293) (Neosartorya fumigata).